We begin with the raw amino-acid sequence, 537 residues long: MWSSWAWTWSWSGAAAVAVAAAAAWVAVYAAAARAAEALWWRPRRVERHFAAQGVRGPGYRFFVGSSIELVRLMVDAASRPMEPPTSHDILPRVLPFYHHWRKLYGPMHLIWFGRTPRLVVSEPELIREVLLTRADHFDRYEAHPMICQFEGYGLSNLHGERWARRRRVLTPAFHTENLRMIAPFVAGTVTRMLDELAERARAGGAGEAEVDVAEWFQRVPQEAITFAAFGRRNYDDGAAVFRLQDELAGYATEAHSKVYIPGYRFLPTRKNRRVWQLDREIRSHLAKFVTGLQSCSSSHGDDADDGGDGGGGMREFMSFMAPAMTAGEIIEESKNFFFAGKETLSNLLTWTTVALAMHPEWQERARREVVAVCGRGDLPTKDHLPKLKTLGMILNETLRLYPPAVAMIRTAKEDVELGGCVVPAGTEVMIPIMAVHHDAAAWGDDAAEFNPARFAADDDGGRRRHPMAFMPFGGGARVCIGQNMALMEAKVALAVVLRRFEFRLSPAYVHAPRVLMILSPQFGAPVIFRPLTSAAA.

A helical membrane pass occupies residues 13–33; that stretch reads GAAAVAVAAAAAWVAVYAAAA. Residue Cys-480 coordinates heme.

Belongs to the cytochrome P450 family. Heme serves as cofactor. Exclusively expressed in roots.

It is found in the membrane. Cytochrome P450 probably involved in brassinosteroids (BRs) inactivation and regulation of BRs homeostasis. This chain is Cytochrome P450 734A5 (CYP734A5), found in Oryza sativa subsp. japonica (Rice).